The sequence spans 144 residues: Large ribosomal subunit protein uL13 (144 aa).

It belongs to the universal ribosomal protein uL13 family. As to quaternary structure, part of the 50S ribosomal subunit.

Functionally, this protein is one of the early assembly proteins of the 50S ribosomal subunit, although it is not seen to bind rRNA by itself. It is important during the early stages of 50S assembly. The sequence is that of Large ribosomal subunit protein uL13 from Syntrophomonas wolfei subsp. wolfei (strain DSM 2245B / Goettingen).